The chain runs to 812 residues: Ribonucleoside-diphosphate reductase large subunit (812 aa).

The region spanning 12-103 is the ATP-cone domain; that stretch reads LYVIKRDGRQ…VSNLHKETKK (92 aa). Residues 16–17, 22–28, T64, and D68 contribute to the ATP site; these read KR and EEVHFDK. GDP-binding residues include S213 and S228. C229 and C455 are joined by a disulfide. DTTP is bound by residues 237-239, K254, R267, and 274-275; these read DSI and CG. N438 provides a ligand contact to GDP. The active-site Proton acceptor is the N438. The active-site Cysteine radical intermediate is C440. GDP-binding positions include E442 and 615-618; that span reads TAST. E442 functions as the Proton acceptor in the catalytic mechanism. A Phosphothreonine modification is found at T778. At S782 the chain carries Phosphoserine. Phosphotyrosine is present on Y786.

This sequence belongs to the ribonucleoside diphosphate reductase large chain family. In terms of assembly, heterodimer of a large and a small subunit.

The enzyme catalyses a 2'-deoxyribonucleoside 5'-diphosphate + [thioredoxin]-disulfide + H2O = a ribonucleoside 5'-diphosphate + [thioredoxin]-dithiol. Its activity is regulated as follows. Under complex allosteric control mediated by deoxynucleoside triphosphates and ATP binding to separate specificity and activation sites on the M1 subunit. The type of nucleotide bound at the specificity site determines substrate preference. It seems probable that ATP makes the enzyme reduce CDP and UDP, dGTP favors ADP reduction and dTTP favors GDP reduction. Stimulated by ATP and inhibited by dATP binding to the activity site. Functionally, provides the precursors necessary for DNA synthesis. Catalyzes the biosynthesis of deoxyribonucleotides from the corresponding ribonucleotides. This chain is Ribonucleoside-diphosphate reductase large subunit (RnrL), found in Drosophila melanogaster (Fruit fly).